We begin with the raw amino-acid sequence, 273 residues long: Large ribosomal subunit protein uL2cz/uL2cy (273 aa).

Disordered regions lie at residues 1-23 (MAIH…SQVK) and 224-273 (NPVD…RRRK).

The protein belongs to the universal ribosomal protein uL2 family. In terms of assembly, part of the 50S ribosomal subunit.

It is found in the plastid. The protein resides in the chloroplast. In Amborella trichopoda, this protein is Large ribosomal subunit protein uL2cz/uL2cy (rpl2-A).